A 496-amino-acid polypeptide reads, in one-letter code: DEAD-box ATP-dependent RNA helicase 38 (496 aa).

The tract at residues 1 to 91 (MADTVEKVPT…SGDTPYTSAS (91 aa)) is disordered. Ala-2 bears the N-acetylalanine mark. Over residues 7–25 (KVPTVVESSSSSTVEASNS) the composition is skewed to low complexity. The span at 27–40 (EKTEPTTEKKKWGD) shows a compositional bias: basic and acidic residues. Over residues 41–51 (VEDDDDEEEAV) the composition is skewed to acidic residues. Over residues 78-91 (KAVTSGDTPYTSAS) the composition is skewed to polar residues. A Q motif motif is present at residues 91 to 120 (SRFEDLNLSPELMKGLYVEMKFEKPSKIQA). The region spanning 125–301 (MIMTPPHKHL…ARTVKDPNQL (177 aa)) is the Helicase ATP-binding domain. 138-145 (AHNGSGKT) provides a ligand contact to ATP. The DEAD box signature appears at 245-248 (DEAD). In terms of domain architecture, Helicase C-terminal spans 329–483 (VIKDQIMELG…EIKSWNSEEE (155 aa)).

Belongs to the DEAD box helicase family. DDX19/DBP5 subfamily. In terms of assembly, interacts with NUP214 (via N-terminus). Constitutively expressed.

It is found in the cytoplasm. Its subcellular location is the nucleus. It carries out the reaction ATP + H2O = ADP + phosphate + H(+). Functionally, ATP-dependent RNA helicase essential for mRNA export from the nucleus. Plays an important role in the positive regulation of CBF/DREB transcription factors. The polypeptide is DEAD-box ATP-dependent RNA helicase 38 (RH38) (Arabidopsis thaliana (Mouse-ear cress)).